The chain runs to 514 residues: HERV-H LTR-associating protein 1 homolog (514 aa).

A signal peptide spans 1–29 (MQSFLLHCPPIRLCMGLACILFLWNAVSG). N-linked (GlcNAc...) asparagine glycans are attached at residues asparagine 58, asparagine 97, asparagine 139, asparagine 161, asparagine 179, asparagine 200, asparagine 217, asparagine 232, and asparagine 321. The interval 379 to 420 (LHPTGILTTPSRLAQPSRASGTLMPGTQTTNPTQAPAPRVPQ) is disordered. Over residues 384-398 (ILTTPSRLAQPSRAS) the composition is skewed to polar residues. Low complexity predominate over residues 403 to 415 (PGTQTTNPTQAPA).

The protein localises to the secreted. This is HERV-H LTR-associating protein 1 homolog (Hhla1) from Mus musculus (Mouse).